The primary structure comprises 186 residues: MAALTDVQRLQSRVEELERWVYGPGGTRGSRKVADGLVKVQVALGNIASKRERVKILYKKIEDLIKYLDPEYIDRIAIPEASKLQFILAEEQFILSQVALLEQVNALVPVLDSASIKAVPEHAARLQRLAQIHIQQQDQCVAITEESKALLEGYNKTTMLLSKQFVQWDELLCQLEAAKQVKPAEE.

Residue A2 is modified to N-acetylalanine. Residues N46 to K66 adopt a coiled-coil conformation.

It belongs to the dynactin subunit 3 family. In terms of assembly, subunit of dynactin, a multiprotein complex part of a tripartite complex with dynein and a adapter, such as BICDL1, BICD2 or HOOK3. The dynactin complex is built around ACTR1A/ACTB filament and consists of an actin-related filament composed of a shoulder domain, a pointed end and a barbed end. Its length is defined by its flexible shoulder domain. The soulder is composed of 2 DCTN1 subunits, 4 DCTN2 and 2 DCTN3. The 4 DCNT2 (via N-terminus) bind the ACTR1A filament and act as molecular rulers to determine the length. The pointed end is important for binding dynein-dynactin cargo adapters. Consists of 4 subunits: ACTR10, DCNT4, DCTN5 and DCTN6. The barbed end is composed of a CAPZA1:CAPZB heterodimers, which binds ACTR1A/ACTB filament and dynactin and stabilizes dynactin.

Its subcellular location is the cytoplasm. The protein resides in the cytoskeleton. The protein localises to the microtubule organizing center. It is found in the centrosome. It localises to the chromosome. Its subcellular location is the centromere. The protein resides in the kinetochore. The protein localises to the spindle. It is found in the cleavage furrow. It localises to the midbody. In terms of biological role, part of the dynactin complex that activates the molecular motor dynein for ultra-processive transport along microtubules. Together with dynein may be involved in spindle assembly and cytokinesis. In Mus musculus (Mouse), this protein is Dynactin subunit 3.